A 363-amino-acid chain; its full sequence is UDP-N-acetylglucosamine--N-acetylmuramyl-(pentapeptide) pyrophosphoryl-undecaprenol N-acetylglucosamine transferase (363 aa).

UDP-N-acetyl-alpha-D-glucosamine contacts are provided by residues 10-12 (TGG), N124, S195, I250, and Q295.

This sequence belongs to the glycosyltransferase 28 family. MurG subfamily.

Its subcellular location is the cell membrane. The catalysed reaction is di-trans,octa-cis-undecaprenyl diphospho-N-acetyl-alpha-D-muramoyl-L-alanyl-D-glutamyl-meso-2,6-diaminopimeloyl-D-alanyl-D-alanine + UDP-N-acetyl-alpha-D-glucosamine = di-trans,octa-cis-undecaprenyl diphospho-[N-acetyl-alpha-D-glucosaminyl-(1-&gt;4)]-N-acetyl-alpha-D-muramoyl-L-alanyl-D-glutamyl-meso-2,6-diaminopimeloyl-D-alanyl-D-alanine + UDP + H(+). It participates in cell wall biogenesis; peptidoglycan biosynthesis. Its function is as follows. Cell wall formation. Catalyzes the transfer of a GlcNAc subunit on undecaprenyl-pyrophosphoryl-MurNAc-pentapeptide (lipid intermediate I) to form undecaprenyl-pyrophosphoryl-MurNAc-(pentapeptide)GlcNAc (lipid intermediate II). The protein is UDP-N-acetylglucosamine--N-acetylmuramyl-(pentapeptide) pyrophosphoryl-undecaprenol N-acetylglucosamine transferase of Listeria monocytogenes serotype 4a (strain HCC23).